We begin with the raw amino-acid sequence, 407 residues long: D-mannose isomerase (407 aa).

Active-site proton donor/acceptor residues include His-251 and His-383.

Belongs to the N-acylglucosamine 2-epimerase family. In terms of assembly, homodimer.

It catalyses the reaction D-mannose = D-fructose. The catalysed reaction is D-lyxose = D-xylulose. With respect to regulation, significantly inhibited by divalent metal ions such as Cu(2+), Cd(2+) or Ca(2+). Catalyzes the reversible isomerization of D-mannose to D-fructose. Shows weaker activity on D-lyxose, but cannot use N-acetyl D-glucosamine. This is D-mannose isomerase from Thermobifida fusca (Thermomonospora fusca).